We begin with the raw amino-acid sequence, 217 residues long: MVKVFLVDDHEVVRRGLVDLLGADPELDVVGEAGSVAEAMARVPAARPDVAVLDVRLPDGNGIELCRDLLSRMPDLRCLILTSYTSDEAMLDAILAGASGYVVKDIKGMELARAVKDVGAGRSLLDNRAAAALMAKLRGAAEKQDPLSGLTDQERTLLGLLSEGLTNKQIADRMFLAEKTVKNYVSRLLAKLGMERRTQAAVFATELKRSRPPGDGP.

The Response regulatory domain occupies 3 to 119 (KVFLVDDHEV…ELARAVKDVG (117 aa)). Residue Asp-54 is modified to 4-aspartylphosphate. In terms of domain architecture, HTH luxR-type spans 143–208 (KQDPLSGLTD…QAAVFATELK (66 aa)). The segment at residues 167–186 (NKQIADRMFLAEKTVKNYVS) is a DNA-binding region (H-T-H motif). Phosphothreonine; by PknH is present on residues Thr-198 and Thr-205.

In terms of assembly, homodimer. Interacts with NarL. Phosphorylated on Asp-54 by both DevS (DosS) and DosT. Phosphorylated on Thr-198 and Thr-205 by PknH, which enhances DevR dimerization. Aspartate phosphorylation and threonine phosphorylation cooperatively enhance DevR binding to DNA.

The protein localises to the cytoplasm. The protein resides in the host cytoplasmic vesicle. Its subcellular location is the host phagosome. In terms of biological role, member of the two-component regulatory system DevR/DevS (also called DosR/DosS) involved in onset of the dormancy response. Regulates an approximately 48-member regulon. When phosphorylated binds and activates the promoter of DevR regulon genes in response to hypoxia. The presence of target DNA increases stability of phospho-DevR in vitro. Activates its own transcription under hypoxic but not aerobic conditions, probably binds as a dimer to tandem binding sites within the devR and hspX promoters. Accepts a phosphate group from DevS (DosS) and from DosT. Does not regulate transcription of dosT. In Mycobacterium tuberculosis (strain ATCC 25618 / H37Rv), this protein is DNA-binding transcriptional activator DevR/DosR.